A 261-amino-acid polypeptide reads, in one-letter code: 2,3-dihydro-2,3-dihydroxybenzoate dehydrogenase (261 aa).

12-36 (FITGAAQGIGEAVARTLASQGAHIA) is an NAD(+) binding site. Position 144 (S144) interacts with substrate. Y157 serves as the catalytic Proton acceptor.

Belongs to the short-chain dehydrogenases/reductases (SDR) family.

It is found in the cytoplasm. It catalyses the reaction (2S,3S)-2,3-dihydroxy-2,3-dihydrobenzoate + NAD(+) = 2,3-dihydroxybenzoate + NADH + H(+). It participates in siderophore biosynthesis; bacillibactin biosynthesis. The polypeptide is 2,3-dihydro-2,3-dihydroxybenzoate dehydrogenase (dhbA) (Bacillus subtilis (strain 168)).